The sequence spans 185 residues: Acireductone dioxygenase (185 aa).

The Fe(2+) site is built by H96, H98, E102, and H140. H96, H98, E102, and H140 together coordinate Ni(2+).

This sequence belongs to the acireductone dioxygenase (ARD) family. In terms of assembly, monomer. The cofactor is Fe(2+). Ni(2+) serves as cofactor.

It carries out the reaction 1,2-dihydroxy-5-(methylsulfanyl)pent-1-en-3-one + O2 = 3-(methylsulfanyl)propanoate + CO + formate + 2 H(+). The enzyme catalyses 1,2-dihydroxy-5-(methylsulfanyl)pent-1-en-3-one + O2 = 4-methylsulfanyl-2-oxobutanoate + formate + 2 H(+). It participates in amino-acid biosynthesis; L-methionine biosynthesis via salvage pathway; L-methionine from S-methyl-5-thio-alpha-D-ribose 1-phosphate: step 5/6. Its function is as follows. Catalyzes 2 different reactions between oxygen and the acireductone 1,2-dihydroxy-3-keto-5-methylthiopentene (DHK-MTPene) depending upon the metal bound in the active site. Fe-containing acireductone dioxygenase (Fe-ARD) produces formate and 2-keto-4-methylthiobutyrate (KMTB), the alpha-ketoacid precursor of methionine in the methionine recycle pathway. Ni-containing acireductone dioxygenase (Ni-ARD) produces methylthiopropionate, carbon monoxide and formate, and does not lie on the methionine recycle pathway. The sequence is that of Acireductone dioxygenase from Marinobacter nauticus (strain ATCC 700491 / DSM 11845 / VT8) (Marinobacter aquaeolei).